A 1240-amino-acid chain; its full sequence is DNA-directed RNA polymerase subunit beta (1240 aa).

The protein belongs to the RNA polymerase beta chain family. In terms of assembly, the RNAP catalytic core consists of 2 alpha, 1 beta, 1 beta' and 1 omega subunit. When a sigma factor is associated with the core the holoenzyme is formed, which can initiate transcription.

It catalyses the reaction RNA(n) + a ribonucleoside 5'-triphosphate = RNA(n+1) + diphosphate. In terms of biological role, DNA-dependent RNA polymerase catalyzes the transcription of DNA into RNA using the four ribonucleoside triphosphates as substrates. This is DNA-directed RNA polymerase subunit beta from Rhodopirellula baltica (strain DSM 10527 / NCIMB 13988 / SH1).